The sequence spans 487 residues: MTITPQQLIAMLPLLIVGLTVVVVMLSIAWRRDHFINATLTVIGLNLALLSLYFVGQVGPMDVTPLMRVDGYSMFYTGLVIIASLATSTFAYPWLVGYPDNREEFYLLVLIAALGGILLTSANHLASLFLGIELLTLPLFGLIGYAYRQKRSLEASIKYMLLSAAASSFLLFGMALLYAESGSLSFVGLGQSLSDSMVHQPLILAGLGMMIVGLGFKLSLVPFQLWTPDVYQGAPAPVSTFLATASKIAIFAVVMRLFMYAPAADSEAVRLVLSIIAVASILFGNLMAISQTNIKRLLGYSSIAHLGYLLIALVAVQTHELALPLETIGVYLAGYLFSSLGAFGVVSLMSSPYKGPDAESLFSYRGLFWHKPILSAVMTVMMLSLAGIPMTLGFIGKFFVVAMGVSANLWWLTGAVVLGSAIGLYYYLRVTVSLFLSPPQSLVRDTPSNWALTAGGVVVLISAILVLVLGIYPQPLITLVQMAQPLM.

The next 14 membrane-spanning stretches (helical) occupy residues L8–I28, F35–V55, G78–Y98, E104–H124, L125–Y145, Y159–A179, I203–F223, P235–M255, L271–Q291, L297–Q317, I328–L348, A376–G396, L409–L428, and A451–I471.

The protein belongs to the complex I subunit 2 family. NDH-1 is composed of 13 different subunits. Subunits NuoA, H, J, K, L, M, N constitute the membrane sector of the complex.

The protein resides in the cell inner membrane. The enzyme catalyses a quinone + NADH + 5 H(+)(in) = a quinol + NAD(+) + 4 H(+)(out). Its function is as follows. NDH-1 shuttles electrons from NADH, via FMN and iron-sulfur (Fe-S) centers, to quinones in the respiratory chain. The immediate electron acceptor for the enzyme in this species is believed to be ubiquinone. Couples the redox reaction to proton translocation (for every two electrons transferred, four hydrogen ions are translocated across the cytoplasmic membrane), and thus conserves the redox energy in a proton gradient. This Yersinia pestis bv. Antiqua (strain Angola) protein is NADH-quinone oxidoreductase subunit N.